A 193-amino-acid polypeptide reads, in one-letter code: Holliday junction branch migration complex subunit RuvA (193 aa).

The tract at residues 1 to 64 (MIGRIAGILL…EDAHLLYGFL (64 aa)) is domain I. Residues 65–139 (TQQERTTFRE…GKLGADLGAL (75 aa)) are domain II. The flexible linker stretch occupies residues 139-143 (LAGAA). The interval 144–193 (SPSDHATDILNALLALGYSEKEGLAAIKNVPAGTGVSEGIKLALKALSKA) is domain III.

It belongs to the RuvA family. Homotetramer. Forms an RuvA(8)-RuvB(12)-Holliday junction (HJ) complex. HJ DNA is sandwiched between 2 RuvA tetramers; dsDNA enters through RuvA and exits via RuvB. An RuvB hexamer assembles on each DNA strand where it exits the tetramer. Each RuvB hexamer is contacted by two RuvA subunits (via domain III) on 2 adjacent RuvB subunits; this complex drives branch migration. In the full resolvosome a probable DNA-RuvA(4)-RuvB(12)-RuvC(2) complex forms which resolves the HJ.

Its subcellular location is the cytoplasm. Its function is as follows. The RuvA-RuvB-RuvC complex processes Holliday junction (HJ) DNA during genetic recombination and DNA repair, while the RuvA-RuvB complex plays an important role in the rescue of blocked DNA replication forks via replication fork reversal (RFR). RuvA specifically binds to HJ cruciform DNA, conferring on it an open structure. The RuvB hexamer acts as an ATP-dependent pump, pulling dsDNA into and through the RuvAB complex. HJ branch migration allows RuvC to scan DNA until it finds its consensus sequence, where it cleaves and resolves the cruciform DNA. This is Holliday junction branch migration complex subunit RuvA from Burkholderia cenocepacia (strain ATCC BAA-245 / DSM 16553 / LMG 16656 / NCTC 13227 / J2315 / CF5610) (Burkholderia cepacia (strain J2315)).